A 1221-amino-acid polypeptide reads, in one-letter code: X-linked retinitis pigmentosa GTPase regulator-interacting protein 1 (1221 aa).

2 stretches are compositionally biased toward polar residues: residues Met1–Pro15 and Gly88–Val97. Disordered stretches follow at residues Met1–Asp22, Ala68–Ser107, and Ser119–Met196. Basic and acidic residues-rich tracts occupy residues His134–Leu147 and Phe155–Val168. Positions Leu267 to Gly533 form a coiled coil. The C2 domain maps to Gln723–Phe843. The interval Pro869–Thr947 is disordered. Residues Gln903–Gly914 are compositionally biased toward polar residues. Positions Ser1027 to Thr1216 are interaction with RPGR.

The protein belongs to the RPGRIP1 family. In terms of assembly, forms homodimers and elongated homopolymers. Interacts with NPHP4. Interacts with NEK4. Interacts with RPGR. Interacts with SPATA7. Interacts with CEP290/NPHP6; mediating the association between RPGR and CEP290/NPHP6. As to expression, retina, brain, skeletal muscle and kidney. Colocalizes with RGPR in the outer segment of rod photoreceptors and cone outer segments.

Its subcellular location is the cell projection. It localises to the cilium. May function as scaffolding protein. Required for normal location of RPGR at the connecting cilium of photoreceptor cells. Required for normal disk morphogenesis and disk organization in the outer segment of photoreceptor cells and for survival of photoreceptor cells. In Bos taurus (Bovine), this protein is X-linked retinitis pigmentosa GTPase regulator-interacting protein 1 (RPGRIP1).